Reading from the N-terminus, the 166-residue chain is NAD(P)H-quinone oxidoreductase subunit I, chloroplastic (166 aa).

4Fe-4S ferredoxin-type domains follow at residues 55–84 (GRIH…VDWK) and 95–124 (LNYS…MTEE). Residues cysteine 64, cysteine 67, cysteine 70, cysteine 74, cysteine 104, cysteine 107, cysteine 110, and cysteine 114 each coordinate [4Fe-4S] cluster.

Belongs to the complex I 23 kDa subunit family. NDH is composed of at least 16 different subunits, 5 of which are encoded in the nucleus. It depends on [4Fe-4S] cluster as a cofactor.

The protein resides in the plastid. It is found in the chloroplast thylakoid membrane. The catalysed reaction is a plastoquinone + NADH + (n+1) H(+)(in) = a plastoquinol + NAD(+) + n H(+)(out). It catalyses the reaction a plastoquinone + NADPH + (n+1) H(+)(in) = a plastoquinol + NADP(+) + n H(+)(out). Its function is as follows. NDH shuttles electrons from NAD(P)H:plastoquinone, via FMN and iron-sulfur (Fe-S) centers, to quinones in the photosynthetic chain and possibly in a chloroplast respiratory chain. The immediate electron acceptor for the enzyme in this species is believed to be plastoquinone. Couples the redox reaction to proton translocation, and thus conserves the redox energy in a proton gradient. This Rensonia salvadorica protein is NAD(P)H-quinone oxidoreductase subunit I, chloroplastic.